The sequence spans 483 residues: MAKTNAVAGFNALNGVELNLFTNEELKAIHYATMEVLMNPGVQVSDPEARQIFKENGCEVDEETKVVKIPEYIVRKALQLAPSRFVLWGRDKKYNTVQECGGKVHWTCFGTGVKMCKYQDGKYVTVDSVEQDIADIAKLCDWAENIDYFSLPVSARDVAGQGAQDVHETFTPIVNTSKHYHHIDPVGENVEYYWDIVKAYYGGDEEEARKKPIFSMLLCPTSPLELSVNACQVIIKGARLGIPVNVLSMAMSGGSSPVYLAGTLVTHNAEVLSGIVLAQLTAPGSKVWYGSSTTTFDLKKGTAPVGSPELGLISAAVAKLAQFYGLPSFVAGSOSDAKIPDSQAGHEKTITTLLPALAGANTIYGAGMLELGMTFSMEQLVIDNDIISMVKKAMEGIPVSEETLSVESIQKVGIGNNFLALKQTRQLIDYPSSPMLIDRRMYGDWAASGSKDLAAVAHEKVVDVLKNHQVKPIDADILKDMQA.

A non-standard amino acid (pyrrolysine) is located at residue Pyl334.

This sequence belongs to the trimethylamine methyltransferase family. In terms of assembly, can form a complex with MttC.

The enzyme catalyses Co(I)-[trimethylamine-specific corrinoid protein] + trimethylamine + H(+) = methyl-Co(III)-[trimethylamine-specific corrinoid protein] + dimethylamine. It functions in the pathway one-carbon metabolism; methanogenesis from trimethylamine. Catalyzes the transfer of a methyl group from trimethylamine to the corrinoid cofactor of MttC. The sequence is that of Trimethylamine methyltransferase MttB (mttB) from Methanosarcina thermophila.